The primary structure comprises 46 residues: Protein PsbN (46 aa).

The helical transmembrane segment at 10-30 (LAIIVLVVLLGLTGLGVYMAF) threads the bilayer.

It belongs to the PsbN family.

It is found in the cellular thylakoid membrane. In terms of biological role, may play a role in photosystem I and II biogenesis. The sequence is that of Protein PsbN from Prochlorococcus marinus (strain MIT 9211).